A 110-amino-acid polypeptide reads, in one-letter code: Large ribosomal subunit protein uL22 (110 aa).

The protein belongs to the universal ribosomal protein uL22 family. In terms of assembly, part of the 50S ribosomal subunit.

This protein binds specifically to 23S rRNA; its binding is stimulated by other ribosomal proteins, e.g. L4, L17, and L20. It is important during the early stages of 50S assembly. It makes multiple contacts with different domains of the 23S rRNA in the assembled 50S subunit and ribosome. In terms of biological role, the globular domain of the protein is located near the polypeptide exit tunnel on the outside of the subunit, while an extended beta-hairpin is found that lines the wall of the exit tunnel in the center of the 70S ribosome. This is Large ribosomal subunit protein uL22 from Shewanella amazonensis (strain ATCC BAA-1098 / SB2B).